We begin with the raw amino-acid sequence, 1148 residues long: Transcription-repair-coupling factor (1148 aa).

The 162-residue stretch at 615-776 (DMCQPLAMDR…MSGMRDLSII (162 aa)) folds into the Helicase ATP-binding domain. Residue 628–635 (GDVGFGKT) coordinates ATP. The short motif at 729-732 (DEEH) is the DEEH box element. In terms of domain architecture, Helicase C-terminal spans 798-951 (VREAILREIL…GFALATHDLE (154 aa)).

It in the N-terminal section; belongs to the UvrB family. This sequence in the C-terminal section; belongs to the helicase family. RecG subfamily. Monomer. Interacts with UvrA and RNAP.

The protein resides in the cytoplasm. In terms of biological role, couples transcription and DNA repair by recognizing RNA polymerase (RNAP) stalled at DNA lesions. Mediates ATP-dependent release of RNAP and its truncated transcript from the DNA, and recruitment of nucleotide excision repair machinery to the damaged site. Can also dissociate RNAP that is blocked by low concentration of nucleoside triphosphates or by physical obstruction, such as bound proteins. In addition, can rescue arrested complexes by promoting forward translocation. Has ATPase activity, which is required for removal of stalled RNAP, but seems to lack helicase activity. May act through a translocase activity that rewinds upstream DNA, leading either to translocation or to release of RNAP when the enzyme active site cannot continue elongation. The chain is Transcription-repair-coupling factor from Escherichia coli (strain K12).